The following is a 370-amino-acid chain: Coiled-coil domain-containing protein 89 (370 aa).

A disordered region spans residues 1 to 38; that stretch reads MPQEESAPRMDTPSSEEPLDKQNRKLEDQEEEMGFKEL. The residue at position 12 (threonine 12) is a Phosphothreonine. Over residues 18–38 the composition is skewed to basic and acidic residues; it reads PLDKQNRKLEDQEEEMGFKEL. The stretch at 19–346 forms a coiled coil; it reads LDKQNRKLED…YDELRLQSEA (328 aa).

The protein belongs to the CCDC89 family. As to quaternary structure, interacts with HEY1.

It localises to the cytoplasm. The protein localises to the nucleus. This is Coiled-coil domain-containing protein 89 from Bos taurus (Bovine).